The primary structure comprises 329 residues: Isopenicillin N synthase (329 aa).

Positions 87, 91, 183, and 189 each coordinate isopenicillin N. 6 residues coordinate N-[(5S)-5-amino-5-carboxypentanoyl]-L-cysteinyl-D-valine: Arg-87, Tyr-91, Ser-183, Tyr-189, His-212, and Asp-214. One can recognise a Fe2OG dioxygenase domain in the interval 180 to 286; it reads SLSSVSLIRY…RLSLPFFLNG (107 aa). Positions 212, 214, and 268 each coordinate Fe(2+). Arg-277 contacts 2-oxoglutarate. Position 279 (Ser-279) interacts with isopenicillin N. Ser-279 is a binding site for N-[(5S)-5-amino-5-carboxypentanoyl]-L-cysteinyl-D-valine.

The protein belongs to the iron/ascorbate-dependent oxidoreductase family. Requires Fe cation as cofactor. It depends on L-ascorbate as a cofactor.

The enzyme catalyses N-[(5S)-5-amino-5-carboxypentanoyl]-L-cysteinyl-D-valine + O2 = isopenicillin N + 2 H2O. Its pathway is antibiotic biosynthesis; penicillin G biosynthesis; penicillin G from L-alpha-aminoadipate and L-cysteine and L-valine: step 2/3. Its function is as follows. Removes, in the presence of oxygen, 4 hydrogen atoms from delta-L-(alpha-aminoadipyl)-L-cysteinyl-D-valine (ACV) to form the azetidinone and thiazolidine rings of isopenicillin. This is Isopenicillin N synthase (pcbC) from Streptomyces clavuligerus.